The sequence spans 421 residues: Lipid II:glycine glycyltransferase (421 aa).

This sequence belongs to the FemABX family. Monomer.

The protein localises to the cytoplasm. The enzyme catalyses beta-D-GlcNAc-(1-&gt;4)-Mur2Ac(oyl-L-Ala-D-isoglutaminyl-L-Lys-D-Ala-D-Ala)-di-trans,octa-cis-undecaprenyl diphosphate + glycyl-tRNA(Gly) = beta-D-GlcNAc-(1-&gt;4)-Mur2Ac(oyl-L-Ala-D-isoglutaminyl-L-Lys-(N(6)-Gly)-D-Ala-D-Ala)-di-trans,octa-cis-undecaprenyl diphosphate + tRNA(Gly) + H(+). Catalyzes the incorporation of the first glycine of the pentaglycine interpeptide bridge, which is characteristic of the S.aureus peptidoglycan. This glycine is added to the epsilon-amino group of the L-lysine of the membrane-bound lipid II intermediate (GlcNAc-(beta-1,4)-N-acetylmuramic acid(-L-Ala-D-iGln-L-Lys-D-Ala-D-Ala)-pyrophosphoryl-undecaprenol), using glycyl-tRNA(Gly) as donor, in a ribosome-independent mechanism. Involved in methicillin resistance. The polypeptide is Lipid II:glycine glycyltransferase (femX) (Staphylococcus aureus (strain USA300)).